A 247-amino-acid polypeptide reads, in one-letter code: MYKLVLIRHGESTWNLDNRFTGWTDVDLTPLGIEQAKNAGRLLKAEGYEFDVAYTSVLKRATRTLWHVLDEMDRTWLPVVNSWRLNERHYGALQGLNKAETAKQYGDAQVLAWRRSYDTPPPALEPTDPRSERADRRYARLSQDQVPLTECLKDTVARVMPFWYEALAPAIKAGKRVVVAAHGNSIRALVKYLDNISDDDIVGLNIPNGIPLVYELDENLKPIRHYYLGDAEAAAKAAAAVASQGKA.

Substrate-binding positions include 8–15 (RHGESTWN), 21–22 (TG), Arg-60, 87–90 (ERHY), Lys-98, 114–115 (RR), and 183–184 (GN). The active-site Tele-phosphohistidine intermediate is His-9. The active-site Proton donor/acceptor is Glu-87.

Belongs to the phosphoglycerate mutase family. BPG-dependent PGAM subfamily. As to quaternary structure, homodimer.

It catalyses the reaction (2R)-2-phosphoglycerate = (2R)-3-phosphoglycerate. The protein operates within carbohydrate degradation; glycolysis; pyruvate from D-glyceraldehyde 3-phosphate: step 3/5. Functionally, catalyzes the interconversion of 2-phosphoglycerate and 3-phosphoglycerate. This is 2,3-bisphosphoglycerate-dependent phosphoglycerate mutase from Albidiferax ferrireducens (strain ATCC BAA-621 / DSM 15236 / T118) (Rhodoferax ferrireducens).